A 484-amino-acid polypeptide reads, in one-letter code: UDP-N-acetylmuramoyl-L-alanyl-D-glutamate--L-lysine ligase (484 aa).

Ser43 contacts UDP-N-acetyl-alpha-D-muramoyl-L-alanyl-D-glutamate. 119 to 125 lines the ATP pocket; sequence GTKGKTT. UDP-N-acetyl-alpha-D-muramoyl-L-alanyl-D-glutamate is bound by residues 161–162, Ser188, and Arg196; that span reads TT. Position 230 is an N6-carboxylysine (Lys230). Residues 405–408 carry the L-lysine recognition motif motif; sequence DDPN.

It belongs to the MurCDEF family. MurE subfamily. Carboxylation is probably crucial for Mg(2+) binding and, consequently, for the gamma-phosphate positioning of ATP.

The protein resides in the cytoplasm. It catalyses the reaction UDP-N-acetyl-alpha-D-muramoyl-L-alanyl-D-glutamate + L-lysine + ATP = UDP-N-acetyl-alpha-D-muramoyl-L-alanyl-gamma-D-glutamyl-L-lysine + ADP + phosphate + H(+). Its pathway is cell wall biogenesis; peptidoglycan biosynthesis. Catalyzes the addition of L-lysine to the nucleotide precursor UDP-N-acetylmuramoyl-L-alanyl-D-glutamate (UMAG) in the biosynthesis of bacterial cell-wall peptidoglycan. The chain is UDP-N-acetylmuramoyl-L-alanyl-D-glutamate--L-lysine ligase from Streptococcus agalactiae serotype III (strain NEM316).